The sequence spans 159 residues: ATP synthase subunit b (159 aa).

Residues 2–22 (NISIPQIIAAILNFIILLLIV) form a helical membrane-spanning segment.

It belongs to the ATPase B chain family. As to quaternary structure, F-type ATPases have 2 components, F(1) - the catalytic core - and F(0) - the membrane proton channel. F(1) has five subunits: alpha(3), beta(3), gamma(1), delta(1), epsilon(1). F(0) has three main subunits: a(1), b(2) and c(10-14). The alpha and beta chains form an alternating ring which encloses part of the gamma chain. F(1) is attached to F(0) by a central stalk formed by the gamma and epsilon chains, while a peripheral stalk is formed by the delta and b chains.

The protein resides in the cell membrane. Functionally, f(1)F(0) ATP synthase produces ATP from ADP in the presence of a proton or sodium gradient. F-type ATPases consist of two structural domains, F(1) containing the extramembraneous catalytic core and F(0) containing the membrane proton channel, linked together by a central stalk and a peripheral stalk. During catalysis, ATP synthesis in the catalytic domain of F(1) is coupled via a rotary mechanism of the central stalk subunits to proton translocation. In terms of biological role, component of the F(0) channel, it forms part of the peripheral stalk, linking F(1) to F(0). The polypeptide is ATP synthase subunit b (Clostridium botulinum (strain ATCC 19397 / Type A)).